Here is a 485-residue protein sequence, read N- to C-terminus: NADH-quinone oxidoreductase subunit N (485 aa).

14 consecutive transmembrane segments (helical) span residues 8-28 (LIAL…MLSI), 35-55 (FLNA…LWFV), 71-91 (GFAM…CTFA), 105-125 (FYLL…ANHL), 127-147 (ALFL…GYAF), 159-179 (YTIL…LVYA), 203-223 (LLAG…LVPF), 235-255 (PAPV…GVVM), 271-291 (VVLG…ALSQ), 297-317 (LLGY…IALQ), 326-346 (VGVY…VVSL), 373-393 (AAVM…LGFI), 408-430 (WWLV…RVAV), and 455-475 (IVVL…QPLI).

Belongs to the complex I subunit 2 family. NDH-1 is composed of 13 different subunits. Subunits NuoA, H, J, K, L, M, N constitute the membrane sector of the complex.

The protein resides in the cell inner membrane. The enzyme catalyses a quinone + NADH + 5 H(+)(in) = a quinol + NAD(+) + 4 H(+)(out). Its function is as follows. NDH-1 shuttles electrons from NADH, via FMN and iron-sulfur (Fe-S) centers, to quinones in the respiratory chain. The immediate electron acceptor for the enzyme in this species is believed to be ubiquinone. Couples the redox reaction to proton translocation (for every two electrons transferred, four hydrogen ions are translocated across the cytoplasmic membrane), and thus conserves the redox energy in a proton gradient. The polypeptide is NADH-quinone oxidoreductase subunit N (Salmonella dublin (strain CT_02021853)).